The primary structure comprises 224 residues: MSPAFNASPDQLTLALSKGRIFKETLPLLAAAGIQVTEDPETSRKLILPTSDPAVRVIIVRASDVPTYVQYGAADFGVAGKDVLMEHGMAGLYAPIDLNIARCRMSVAVPAGFDYVNAVRQGARLAVATKYVQTAREHFAKKGVHVDLIKLYGSMELGPLVGLSDAIVDLVSTGSTLRANNLVEVEEIVQISSRLVVNQAALKLKRERLAPILDAFERASAALA.

Belongs to the ATP phosphoribosyltransferase family. Short subfamily. In terms of assembly, heteromultimer composed of HisG and HisZ subunits.

It localises to the cytoplasm. It catalyses the reaction 1-(5-phospho-beta-D-ribosyl)-ATP + diphosphate = 5-phospho-alpha-D-ribose 1-diphosphate + ATP. It functions in the pathway amino-acid biosynthesis; L-histidine biosynthesis; L-histidine from 5-phospho-alpha-D-ribose 1-diphosphate: step 1/9. Functionally, catalyzes the condensation of ATP and 5-phosphoribose 1-diphosphate to form N'-(5'-phosphoribosyl)-ATP (PR-ATP). Has a crucial role in the pathway because the rate of histidine biosynthesis seems to be controlled primarily by regulation of HisG enzymatic activity. The chain is ATP phosphoribosyltransferase from Cupriavidus metallidurans (strain ATCC 43123 / DSM 2839 / NBRC 102507 / CH34) (Ralstonia metallidurans).